A 245-amino-acid polypeptide reads, in one-letter code: uncharacterized protein (245 aa).

Positions 1–19 (MKLTQFISYAILSLSGVQA) are cleaved as a signal peptide.

The protein resides in the secreted. This is an uncharacterized protein from Arthroderma benhamiae (strain ATCC MYA-4681 / CBS 112371) (Trichophyton mentagrophytes).